A 625-amino-acid polypeptide reads, in one-letter code: Phosphomethylpyrimidine synthase (625 aa).

Substrate contacts are provided by residues Asn-231, Met-260, Tyr-289, His-325, 345–347 (SRG), 386–389 (DGLR), and Glu-425. His-429 provides a ligand contact to Zn(2+). Tyr-452 contacts substrate. A Zn(2+)-binding site is contributed by His-493. Residues Cys-573, Cys-576, and Cys-581 each coordinate [4Fe-4S] cluster.

The protein belongs to the ThiC family. As to quaternary structure, homodimer. [4Fe-4S] cluster is required as a cofactor.

The enzyme catalyses 5-amino-1-(5-phospho-beta-D-ribosyl)imidazole + S-adenosyl-L-methionine = 4-amino-2-methyl-5-(phosphooxymethyl)pyrimidine + CO + 5'-deoxyadenosine + formate + L-methionine + 3 H(+). Its pathway is cofactor biosynthesis; thiamine diphosphate biosynthesis. In terms of biological role, catalyzes the synthesis of the hydroxymethylpyrimidine phosphate (HMP-P) moiety of thiamine from aminoimidazole ribotide (AIR) in a radical S-adenosyl-L-methionine (SAM)-dependent reaction. This Acinetobacter baumannii (strain SDF) protein is Phosphomethylpyrimidine synthase.